Consider the following 284-residue polypeptide: Bifunctional protein FolD (284 aa).

NADP(+) contacts are provided by residues 165-167 (GRS), S190, and V231.

It belongs to the tetrahydrofolate dehydrogenase/cyclohydrolase family. In terms of assembly, homodimer.

The catalysed reaction is (6R)-5,10-methylene-5,6,7,8-tetrahydrofolate + NADP(+) = (6R)-5,10-methenyltetrahydrofolate + NADPH. It carries out the reaction (6R)-5,10-methenyltetrahydrofolate + H2O = (6R)-10-formyltetrahydrofolate + H(+). It functions in the pathway one-carbon metabolism; tetrahydrofolate interconversion. In terms of biological role, catalyzes the oxidation of 5,10-methylenetetrahydrofolate to 5,10-methenyltetrahydrofolate and then the hydrolysis of 5,10-methenyltetrahydrofolate to 10-formyltetrahydrofolate. This chain is Bifunctional protein FolD, found in Bacillus licheniformis (strain ATCC 14580 / DSM 13 / JCM 2505 / CCUG 7422 / NBRC 12200 / NCIMB 9375 / NCTC 10341 / NRRL NRS-1264 / Gibson 46).